The primary structure comprises 101 residues: Transcription and mRNA export factor SUS1 (101 aa).

It belongs to the ENY2 family. Component of the nuclear pore complex (NPC)-associated TREX-2 complex (transcription and export complex 2), composed of at least SUS1, SAC3, THP1, SEM1, and CDC31. TREX-2 contains 2 SUS1 chains. The TREX-2 complex interacts with the nucleoporin NUP1. Component of the 1.8 MDa SAGA transcription coactivator-HAT complex. SAGA is built of 5 distinct domains with specialized functions. Within the SAGA complex, SUS1, SGF11, SGF73 and UBP8 form an additional subcomplex of SAGA called the DUB module (deubiquitination module). Interacts directly with THP1, SAC3, SGF11, and with the RNA polymerase II.

It localises to the nucleus. The protein localises to the nucleoplasm. It is found in the cytoplasm. The protein resides in the P-body. Its function is as follows. Involved in mRNA export coupled transcription activation by association with both the TREX-2 and the SAGA complexes. At the promoters, SAGA is required for recruitment of the basal transcription machinery. It influences RNA polymerase II transcriptional activity through different activities such as TBP interaction and promoter selectivity, interaction with transcription activators, and chromatin modification through histone acetylation and deubiquitination. Within the SAGA complex, participates in a subcomplex required for deubiquitination of H2B and for the maintenance of steady-state H3 methylation levels. The TREX-2 complex functions in docking export-competent ribonucleoprotein particles (mRNPs) to the nuclear entrance of the nuclear pore complex (nuclear basket). TREX-2 participates in mRNA export and accurate chromatin positioning in the nucleus by tethering genes to the nuclear periphery. May also be involved in cytoplasmic mRNA decay by interaction with components of P-bodies. This is Transcription and mRNA export factor SUS1 from Debaryomyces hansenii (strain ATCC 36239 / CBS 767 / BCRC 21394 / JCM 1990 / NBRC 0083 / IGC 2968) (Yeast).